The primary structure comprises 143 residues: MSTVPSVQTFGKKKSATAVAHVKAGKGLIKVNGSPITLVEPEILRFKVYEPLLLVGLDKFANIDIRVRVTGGGHVSQVYAIRQAIAKGLVAYHQKFVDEQSKNELKKAFTSYDRTLLIADARRPEPKKFGGKGARARFQKSYR.

Residues Pro-124–Arg-143 are disordered. The segment covering Ala-134–Arg-143 has biased composition (basic residues).

Belongs to the universal ribosomal protein uS9 family.

The protein is Small ribosomal subunit protein uS9 (RPS16) of Candida glabrata (strain ATCC 2001 / BCRC 20586 / JCM 3761 / NBRC 0622 / NRRL Y-65 / CBS 138) (Yeast).